Consider the following 299-residue polypeptide: 4-diphosphocytidyl-2-C-methyl-D-erythritol kinase (299 aa).

Lys-17 is an active-site residue. 103–113 serves as a coordination point for ATP; it reads PVASGIGGGSG. Asp-145 is a catalytic residue.

The protein belongs to the GHMP kinase family. IspE subfamily.

The enzyme catalyses 4-CDP-2-C-methyl-D-erythritol + ATP = 4-CDP-2-C-methyl-D-erythritol 2-phosphate + ADP + H(+). It functions in the pathway isoprenoid biosynthesis; isopentenyl diphosphate biosynthesis via DXP pathway; isopentenyl diphosphate from 1-deoxy-D-xylulose 5-phosphate: step 3/6. Its function is as follows. Catalyzes the phosphorylation of the position 2 hydroxy group of 4-diphosphocytidyl-2C-methyl-D-erythritol. The sequence is that of 4-diphosphocytidyl-2-C-methyl-D-erythritol kinase from Bartonella tribocorum (strain CIP 105476 / IBS 506).